The chain runs to 488 residues: Ribulose bisphosphate carboxylase large chain (488 aa).

Substrate contacts are provided by asparagine 127 and threonine 177. Lysine 179 acts as the Proton acceptor in catalysis. A substrate-binding site is contributed by lysine 181. Mg(2+) is bound by residues lysine 205, aspartate 207, and glutamate 208. Position 205 is an N6-carboxylysine (lysine 205). Residue histidine 297 is the Proton acceptor of the active site. The substrate site is built by arginine 298, histidine 330, and serine 382.

The protein belongs to the RuBisCO large chain family. Type I subfamily. As to quaternary structure, heterohexadecamer of 8 large chains and 8 small chains. The cofactor is Mg(2+).

It is found in the plastid. Its subcellular location is the chloroplast. It carries out the reaction 2 (2R)-3-phosphoglycerate + 2 H(+) = D-ribulose 1,5-bisphosphate + CO2 + H2O. It catalyses the reaction D-ribulose 1,5-bisphosphate + O2 = 2-phosphoglycolate + (2R)-3-phosphoglycerate + 2 H(+). Functionally, ruBisCO catalyzes two reactions: the carboxylation of D-ribulose 1,5-bisphosphate, the primary event in carbon dioxide fixation, as well as the oxidative fragmentation of the pentose substrate in the photorespiration process. Both reactions occur simultaneously and in competition at the same active site. This is Ribulose bisphosphate carboxylase large chain (rbcL) from Pyropia dentata (Red alga).